The sequence spans 298 residues: Inosose dehydratase (298 aa).

Belongs to the IolE/MocC family. The cofactor is glutathione. Co(2+) is required as a cofactor. It depends on Mn(2+) as a cofactor.

The enzyme catalyses scyllo-inosose = 3D-3,5/4-trihydroxycyclohexane-1,2-dione + H2O. The protein operates within polyol metabolism; myo-inositol degradation into acetyl-CoA; acetyl-CoA from myo-inositol: step 2/7. Functionally, catalyzes the dehydration of inosose (2-keto-myo-inositol, 2KMI or 2,4,6/3,5-pentahydroxycyclohexanone) to 3D-(3,5/4)-trihydroxycyclohexane-1,2-dione (D-2,3-diketo-4-deoxy-epi-inositol). The polypeptide is Inosose dehydratase (Clostridium beijerinckii (strain ATCC 51743 / NCIMB 8052) (Clostridium acetobutylicum)).